We begin with the raw amino-acid sequence, 302 residues long: Sulfate adenylyltransferase subunit 2 (302 aa).

Belongs to the PAPS reductase family. CysD subfamily. As to quaternary structure, heterodimer composed of CysD, the smaller subunit, and CysN.

It carries out the reaction sulfate + ATP + H(+) = adenosine 5'-phosphosulfate + diphosphate. It participates in sulfur metabolism; hydrogen sulfide biosynthesis; sulfite from sulfate: step 1/3. With CysN forms the ATP sulfurylase (ATPS) that catalyzes the adenylation of sulfate producing adenosine 5'-phosphosulfate (APS) and diphosphate, the first enzymatic step in sulfur assimilation pathway. APS synthesis involves the formation of a high-energy phosphoric-sulfuric acid anhydride bond driven by GTP hydrolysis by CysN coupled to ATP hydrolysis by CysD. The polypeptide is Sulfate adenylyltransferase subunit 2 (Citrobacter koseri (strain ATCC BAA-895 / CDC 4225-83 / SGSC4696)).